The sequence spans 378 residues: MRMLVSGRRVKKWQLIIQLFATCFLASLMFFWEPIDNHIVSHMKSYSYRYLINSYDFVNDTLSLKHTSAGPRYQYLINHKEKCQAQDVLLLLFVKTAPENYDRRSGIRRTWGNENYVRSQLNANIKTLFALGTPNPLEGEELQRKLAWEDQRYNDIIQQDFVDSFYNLTLKLLMQFSWANTYCPHAKFLMTADDDIFIHMPNLIEYLQSLEQIGVQDFWIGRVHRGAPPIRDKSSKYYVSYEMYQWPAYPDYTAGAAYVISGDVAAKVYEASQTLNSSLYIDDVFMGLCANKIGIVPQDHVFFSGEGKTPYHPCIYEKMMTSHGHLEDLQDLWKNATDPKVKTISKGFFGQIYCRLMKIILLCKISYVDTYPCRAAFI.

The Cytoplasmic segment spans residues 1–14; it reads MRMLVSGRRVKKWQ. Residues 15–35 traverse the membrane as a helical; Signal-anchor for type II membrane protein segment; that stretch reads LIIQLFATCFLASLMFFWEPI. Over 36-378 the chain is Lumenal; that stretch reads DNHIVSHMKS…DTYPCRAAFI (343 aa). Asparagine 59 carries an N-linked (GlcNAc...) asparagine glycan.

The protein belongs to the glycosyltransferase 31 family. In terms of tissue distribution, widely expressed. Highly expressed in lung, colon, placenta, testis, pituitary gland and cerebellum. Weakly expressed in brain, liver, spleen, lymph node and thymus.

The protein localises to the golgi apparatus membrane. It catalyses the reaction a beta-D-Gal-(1-&gt;4)-beta-D-Glc-(1&lt;-&gt;1)-Cer(d18:1(4E)) + UDP-N-acetyl-alpha-D-glucosamine = a beta-D-GlcNAc-(1-&gt;3)-beta-D-Gal-(1-&gt;4)-beta-D-Glc-(1&lt;-&gt;1)-Cer(d18:1(4E)) + UDP + H(+). The catalysed reaction is a neolactoside nLc4Cer(d18:1(4E)) + UDP-N-acetyl-alpha-D-glucosamine = a neolactoside IV(3)-beta-GlcNAc-nLc4Cer(d18:1(4E)) + UDP + H(+). It participates in protein modification; protein glycosylation. Beta-1,3-N-acetylglucosaminyltransferase that plays a key role in the synthesis of lacto- or neolacto-series carbohydrate chains on glycolipids, notably by participating in biosynthesis of HNK-1 and Lewis X carbohydrate structures. Has strong activity toward lactosylceramide (LacCer) and neolactotetraosylceramide (nLc(4)Cer; paragloboside), resulting in the synthesis of Lc(3)Cer and neolactopentaosylceramide (nLc(5)Cer), respectively. Probably plays a central role in regulating neolacto-series glycolipid synthesis during embryonic development. In Homo sapiens (Human), this protein is Lactosylceramide 1,3-N-acetyl-beta-D-glucosaminyltransferase.